The chain runs to 172 residues: Myosin regulatory light chain 12B (172 aa).

Residues 1–16 (MSSKKAKTKTTKKRPQ) are compositionally biased toward basic residues. The tract at residues 1–20 (MSSKKAKTKTTKKRPQRATS) is disordered. The residue at position 19 (T19) is a Phosphothreonine; by MLCK and ZIPK/DAPK3. S20 carries the phosphoserine; by MLCK and ZIPK/DAPK3 modification. 3 EF-hand domains span residues 29 to 64 (SQIQ…LGKN), 98 to 133 (DPED…MGDR), and 134 to 169 (FTDE…GAKD). Ca(2+) contacts are provided by D42, N44, D46, and D53.

As to quaternary structure, myosin is a hexamer of 2 heavy chains and 4 light chains: interacts with myosin heavy chain MYO19. In terms of processing, phosphorylation increases the actin-activated myosin ATPase activity and thereby regulates the contractile activity. It is required to generate the driving force in the migration of the cells but not necessary for localization of myosin-2 at the leading edge. Phosphorylation is reduced following epigallocatechin-3-O-gallate treatment. In terms of tissue distribution, ubiquitously expressed in various hematopoietic cells.

Myosin regulatory subunit that plays an important role in regulation of both smooth muscle and nonmuscle cell contractile activity via its phosphorylation. Phosphorylation triggers actin polymerization in vascular smooth muscle. Implicated in cytokinesis, receptor capping, and cell locomotion. The sequence is that of Myosin regulatory light chain 12B (MYL12B) from Homo sapiens (Human).